The chain runs to 692 residues: ATP-dependent RNA helicase MSS116, mitochondrial (692 aa).

The transit peptide at 1-37 directs the protein to the mitochondrion; it reads MMIARFGKQVLRKNVLVSNRIHFPVISRGFHNSFINK. The segment at 82 to 113 is disordered; sequence SQVTEQTELTKSEEEEKKKKNINTNTNKNDRK. The span at 89 to 99 shows a compositional bias: basic and acidic residues; sequence ELTKSEEEEKK. Positions 130 to 158 match the Q motif motif; sequence DFKNTGLIDDVILRALDRAHFKDLTPIQQ. The region spanning 162–349 is the Helicase ATP-binding domain; sequence VPLLETERGM…KQHINKKYDY (188 aa). ATP is bound at residue 175–182; sequence AKTGTGKT. Positions 290–293 match the DEAD box motif; that stretch reads DEAD. Residues 384–534 enclose the Helicase C-terminal domain; that stretch reads YVNQLVKDSP…QVHESSEIDN (151 aa). Positions 643–692 are disordered; that stretch reads NRYSGGGGNRSEKRFSFAGRGGNSGGHSGRGRGGRSGYSGGRSSQYSDWE. Residues 661-670 are compositionally biased toward gly residues; the sequence is GRGGNSGGHS.

Belongs to the DEAD box helicase family. DDX18/HAS1 subfamily.

Its subcellular location is the mitochondrion matrix. It catalyses the reaction ATP + H2O = ADP + phosphate + H(+). Functionally, ATP-dependent RNA helicase required for mitochondrial splicing of group I and II introns. Also required for efficient mitochondrial translation. In Lodderomyces elongisporus (strain ATCC 11503 / CBS 2605 / JCM 1781 / NBRC 1676 / NRRL YB-4239) (Yeast), this protein is ATP-dependent RNA helicase MSS116, mitochondrial (MSS116).